The following is a 220-amino-acid chain: Iron-sulfur cluster repair protein YtfE (220 aa).

Belongs to the RIC family. YtfE subfamily. Homodimer.

It localises to the cytoplasm. Functionally, di-iron-containing protein involved in the repair of iron-sulfur clusters damaged by oxidative and nitrosative stress conditions. This is Iron-sulfur cluster repair protein YtfE from Salmonella schwarzengrund (strain CVM19633).